Reading from the N-terminus, the 295-residue chain is Pyridoxal 5'-phosphate synthase subunit PdxS (295 aa).

D25 is a binding site for D-ribose 5-phosphate. K82 (schiff-base intermediate with D-ribose 5-phosphate) is an active-site residue. G154 lines the D-ribose 5-phosphate pocket. R166 contributes to the D-glyceraldehyde 3-phosphate binding site. D-ribose 5-phosphate is bound by residues G215 and 236-237; that span reads GS.

It belongs to the PdxS/SNZ family. In the presence of PdxT, forms a dodecamer of heterodimers.

It carries out the reaction aldehydo-D-ribose 5-phosphate + D-glyceraldehyde 3-phosphate + L-glutamine = pyridoxal 5'-phosphate + L-glutamate + phosphate + 3 H2O + H(+). The protein operates within cofactor biosynthesis; pyridoxal 5'-phosphate biosynthesis. Catalyzes the formation of pyridoxal 5'-phosphate from ribose 5-phosphate (RBP), glyceraldehyde 3-phosphate (G3P) and ammonia. The ammonia is provided by the PdxT subunit. Can also use ribulose 5-phosphate and dihydroxyacetone phosphate as substrates, resulting from enzyme-catalyzed isomerization of RBP and G3P, respectively. This Listeria monocytogenes serotype 4b (strain CLIP80459) protein is Pyridoxal 5'-phosphate synthase subunit PdxS.